The following is a 198-amino-acid chain: Cytokinin riboside 5'-monophosphate phosphoribohydrolase (198 aa).

Substrate is bound by residues Glu-91, 109 to 110, 126 to 132, and Thr-138; these read RK and GVGTAEE.

Belongs to the LOG family.

The catalysed reaction is N(6)-(dimethylallyl)adenosine 5'-phosphate + H2O = N(6)-dimethylallyladenine + D-ribose 5-phosphate. It catalyses the reaction 9-ribosyl-trans-zeatin 5'-phosphate + H2O = trans-zeatin + D-ribose 5-phosphate. Functionally, catalyzes the hydrolytic removal of ribose 5'-monophosphate from nitrogen N6-modified adenosines, the final step of bioactive cytokinin synthesis. This chain is Cytokinin riboside 5'-monophosphate phosphoribohydrolase (fas6), found in Rhodococcoides fascians (Rhodococcus fascians).